Reading from the N-terminus, the 1183-residue chain is SRC kinase signaling inhibitor 1 (1183 aa).

Residues 1-44 form a disordered region; the sequence is MGNAPSQDPERSSPPMLSADDAEYPREYRTLGGGGGGGSGGRRF. 2 positions are modified to phosphoserine: Ser-13 and Ser-18. The span at 31 to 41 shows a compositional bias: gly residues; the sequence is LGGGGGGGSGG. A Phosphoserine modification is found at Ser-45. Phosphothreonine is present on Thr-52. Phosphoserine is present on residues Ser-53, Ser-64, Ser-143, Ser-165, Ser-169, Ser-179, and Ser-225. Tyr-241 is subject to Phosphotyrosine. Positions 284–379 are disordered; it reads ASRESSPTRR…ERRDVKPDED (96 aa). The span at 286 to 296 shows a compositional bias: polar residues; that stretch reads RESSPTRRLNN. The span at 297–306 shows a compositional bias: low complexity; it reads LSPAPHLASG. Phosphoserine is present on residues Ser-298, Ser-307, and Ser-324. The segment covering 313–331 has biased composition (low complexity); sequence PSGLPSGLQSGSPSRSRLS. Omega-N-methylarginine occurs at positions 329 and 336. A phosphoserine mark is found at Ser-343, Ser-362, and Ser-364. Basic and acidic residues predominate over residues 369–379; sequence LERRDVKPDED. Tyr-396 is modified (phosphotyrosine). The interval 466–643 is disordered; that stretch reads YGFRLPPSSP…ASSTPAGQPT (178 aa). Residues 485-497 are compositionally biased toward pro residues; that stretch reads PGGPPPPHSPYSG. Ser-493, Ser-496, and Ser-500 each carry phosphoserine. Arg-501 carries the post-translational modification Omega-N-methylarginine. Phosphoserine occurs at positions 503, 513, 515, 517, and 522. Over residues 524–541 the composition is skewed to low complexity; sequence GGKTRSAGSASTAGAPPS. Basic and acidic residues predominate over residues 562 to 574; that stretch reads KDTETRERMEAME. Ser-598 and Ser-621 each carry phosphoserine. Residues Thr-624 and Thr-637 each carry the phosphothreonine modification. The segment covering 634–643 has biased composition (low complexity); that stretch reads ASSTPAGQPT. The interval 647 to 697 is interaction with SNAP25; the sequence is RLQMQLHLRGLQNSASDLRGQLQQLRKLQLQNQESVRALLKRTEAELSMRV. Coiled-coil stretches lie at residues 654–674 and 726–746; these read LRGLQNSASDLRGQLQQLRKL and EELITQQLNDLEKSVEKIQRD. Residues Ser-844, Ser-857, and Ser-866 each carry the phosphoserine modification. Disordered regions lie at residues 861–907 and 949–1032; these read EMPP…KAVS and DCAS…VTSK. Thr-884 is modified (phosphothreonine). Phosphoserine is present on Ser-987. Over residues 1002-1011 the composition is skewed to pro residues; the sequence is KSPPPPPPRR. A phosphoserine mark is found at Ser-1043 and Ser-1060. Disordered regions lie at residues 1058-1081 and 1105-1183; these read AVSEVARPASTPPIMASAIKDEDD and GASR…SISF. Over residues 1135–1183 the composition is skewed to polar residues; the sequence is QAQQQATKPSKEMSGSNETSSPVSEKPSASRTSIPVLTSFGARNSSISF.

The protein belongs to the SRCIN1 family. As to quaternary structure, interacts with the N-terminal coiled-coil region of SNAP25. Interacts with BCAR1/p130Cas and SRC through its C-terminal domain. Interacts with CSK, CTTN, SORBS3/vinexin, SYP and MAPRE3/EB3. In terms of processing, tyrosine-phosphorylated in response to EGF and to cell adhesion to integrin ligands. As to expression, expressed in some primary breast carcinomas where its presence is significantly associated with increased tumor size. Not detected in normal breast tissue.

Its subcellular location is the cytoplasm. The protein localises to the cytoskeleton. The protein resides in the cell projection. It is found in the axon. It localises to the dendrite. Its subcellular location is the presynapse. The protein localises to the postsynapse. The protein resides in the postsynaptic density. In terms of biological role, acts as a negative regulator of SRC by activating CSK which inhibits SRC activity and downstream signaling, leading to impaired cell spreading and migration. Regulates dendritic spine morphology. Involved in calcium-dependent exocytosis. May play a role in neurotransmitter release or synapse maintenance. This chain is SRC kinase signaling inhibitor 1, found in Homo sapiens (Human).